The following is a 120-amino-acid chain: Large ribosomal subunit protein uL18 (120 aa).

It belongs to the universal ribosomal protein uL18 family. In terms of assembly, part of the 50S ribosomal subunit; part of the 5S rRNA/L5/L18/L25 subcomplex. Contacts the 5S and 23S rRNAs.

Its function is as follows. This is one of the proteins that bind and probably mediate the attachment of the 5S RNA into the large ribosomal subunit, where it forms part of the central protuberance. The sequence is that of Large ribosomal subunit protein uL18 from Rhodopseudomonas palustris (strain BisA53).